The sequence spans 193 residues: Protein Syd (193 aa).

The protein belongs to the Syd family.

Its subcellular location is the cell inner membrane. Interacts with the SecY protein in vivo. May bind preferentially to an uncomplexed state of SecY, thus functioning either as a chelating agent for excess SecY in the cell or as a regulatory factor that negatively controls the translocase function. The sequence is that of Protein Syd from Tolumonas auensis (strain DSM 9187 / NBRC 110442 / TA 4).